Reading from the N-terminus, the 388-residue chain is Ras-related protein Rab-26 (388 aa).

The disordered stretch occupies residues 1-115 (MASTAVGLGG…HHHSQLSLTG (115 aa)). The segment covering 7 to 21 (GLGGGEGDPGAGGPP) has biased composition (gly residues). The span at 47–56 (RIEELRRRPF) shows a compositional bias: basic and acidic residues. The segment covering 67–86 (PASVSASITTTTTQQQQQHH) has biased composition (low complexity). The segment covering 87–109 (NPSHHHQSSHHQPSHHHHHHHHS) has biased composition (basic residues). 197 to 204 (GDSGVGKT) serves as a coordination point for GTP. The Effector region signature appears at 219–228 (SFSATVGIAL). GTP contacts are provided by residues 246–250 (DTAGQ) and 304–307 (NKAD). Residue Cys382 is the site of S-palmitoyl cysteine attachment. Cys385 is subject to Cysteine methyl ester. Cys385 carries S-geranylgeranyl cysteine lipidation. A propeptide spans 386–388 (RNM) (removed in mature form).

This sequence belongs to the small GTPase superfamily. Rab family.

Its subcellular location is the cell membrane. In terms of biological role, participates in exocrine secretion. The chain is Ras-related protein Rab-26 from Drosophila melanogaster (Fruit fly).